The following is a 503-amino-acid chain: Ribose import ATP-binding protein RbsA (503 aa).

ABC transporter domains are found at residues 10 to 246 (LEVR…VGRD) and 256 to 500 (VEPG…TGSE). An ATP-binding site is contributed by 42 to 49 (GENGAGKS).

Belongs to the ABC transporter superfamily. Ribose importer (TC 3.A.1.2.1) family. The complex is composed of an ATP-binding protein (RbsA), two transmembrane proteins (RbsC) and a solute-binding protein (RbsB).

The protein localises to the cell membrane. It catalyses the reaction D-ribose(out) + ATP + H2O = D-ribose(in) + ADP + phosphate + H(+). In terms of biological role, part of the ABC transporter complex RbsABC involved in ribose import. Responsible for energy coupling to the transport system. In Rhodococcus jostii (strain RHA1), this protein is Ribose import ATP-binding protein RbsA.